We begin with the raw amino-acid sequence, 327 residues long: MLSHDWTDNRKNLMLFSGRAHPELAEQVAKELDMHVTTQDAREFANGEIFVRFHESVRGCDAFVLQSCPAPVNTWLMEQLIMIDALKRGSAKRITAVIPFYPYARQDKKHRGREPISARLVADLLKTAGADRIVTVDLHTDQIQGFFDGPVDHMRGQNLLTGYIKNNYPDTNMVVVSPDSGRVRIAEKWGDALGGVPLAFIHKTRDLRVPNQVVSNRVVGEVEGRTCVLIDDMIDTGGTVAGAVQLLRNDGASDVIIAATHGVLSPPAAERLAQYGTREVIVTNTLPIGEEKRFPQLTVLSIAPLLASTIRAIFENGSVTGLFDGEA.

Residues N46–E48 and R105–Q106 contribute to the ATP site. Positions 139 and 179 each coordinate Mg(2+). K203 is a catalytic residue. Residues R205, D231, and D235–T239 contribute to the D-ribose 5-phosphate site.

This sequence belongs to the ribose-phosphate pyrophosphokinase family. Class I subfamily. Homohexamer. Mg(2+) is required as a cofactor.

The protein resides in the cytoplasm. The enzyme catalyses D-ribose 5-phosphate + ATP = 5-phospho-alpha-D-ribose 1-diphosphate + AMP + H(+). It participates in metabolic intermediate biosynthesis; 5-phospho-alpha-D-ribose 1-diphosphate biosynthesis; 5-phospho-alpha-D-ribose 1-diphosphate from D-ribose 5-phosphate (route I): step 1/1. Its function is as follows. Involved in the biosynthesis of the central metabolite phospho-alpha-D-ribosyl-1-pyrophosphate (PRPP) via the transfer of pyrophosphoryl group from ATP to 1-hydroxyl of ribose-5-phosphate (Rib-5-P). This is Ribose-phosphate pyrophosphokinase from Mycobacterium leprae (strain TN).